Here is a 327-residue protein sequence, read N- to C-terminus: Secondary metabolism regulator LAE1 (327 aa).

This sequence belongs to the methyltransferase superfamily. LaeA methyltransferase family.

The protein resides in the nucleus. The enzyme catalyses L-methionyl-[protein] + S-adenosyl-L-methionine = S-methyl-L-methionyl-[protein] + S-adenosyl-L-homocysteine. Its function is as follows. Secondary metabolism regulator that controls the expression of the tenuazonic acid biosynthesis cluster. Methyltransferase that performs automethylation. No other methyl-accepting substrate has been identified yet. The polypeptide is Secondary metabolism regulator LAE1 (Pyricularia oryzae (strain 70-15 / ATCC MYA-4617 / FGSC 8958) (Rice blast fungus)).